The sequence spans 262 residues: Dimeric xanthone biosynthesis cluster protein R11 (262 aa).

The tract at residues 69-160 (IADLLFYTKT…PQLFKHLNDE (92 aa)) is hemerythrin-like.

Its pathway is secondary metabolite biosynthesis. Its function is as follows. Part of the gene cluster that mediates the biosynthesis of the dimeric xanthones cryptosporioptides. The pathway begins with the synthesis of atrochrysone thioester by the polyketide synthase dmx-nrPKS. The atrochrysone carboxyl ACP thioesterase dmxR1 then breaks the thioester bond and releases the atrochrysone carboxylic acid from dmx-nrPKS. Atrochrysone carboxylic acid is decarboxylated by the decarboxylase dmxR15, and oxidized by the anthrone oxygenase dmxR16 to yield emodin. Emodin is then reduced to emodin hydroquinone by the oxidoreductase dmxR7. A-ring reduction by the short chain dehydrogenase dmxR18, dehydration by the scytalone dehydratase-like protein dmxR17 and probable spontaneous re-oxidation, results in overall deoxygenation to chrysophanol. Baeyer-Villiger oxidation by the Baeyer-Villiger monooxygenase (BVMO) dmxR6 then yields monodictylactone in equilibrium with monodictyphenone. In the case of the cryptosporioptides biosynthesis, monodictylactone is reduced at C-12 to an alcohol (by the short chain dehydrogenases dmxR12 or dmxR8) and hydroxylated at C-5 by dmxR9, yielding the electron-rich aromatic which could eliminate H(2)O to form the ortho-quinonemethide, followed by tautomerisation to paraquinone and complete the formal reduction to produce the 10-methylgroup. Conjugate addition of C-4a-OH to the resulting paraquinone by the monooxygenase dmxR10 then gives cyclohexadienone, which is then reduced at C-5 by the short chain dehydrogenase dmxR3 to give the dihydroxanthone. The 6,7-epoxide in the cryptosporioptides could be introduced by the cytochrome P450 monooxygenase dmxL3. The highly reducing PKS dmxL2 manufactures butyrate, which is further carboxylated by dmxL1 to form ethylmalonate. It is not yet clear whether the carboxylation occurs while the butyrate is attached to the ACP of dmxL2, but this unusual fungal metabolite could then be esterified to O-5 by the O-acetyltransferase dmxR13. Finally, dimerization performed by dmxR5 gives the observed dimers cryptosporioptides A, B and C as the final products of the pathway. This is Dimeric xanthone biosynthesis cluster protein R11 from Cryptosporiopsis sp. (strain 8999).